We begin with the raw amino-acid sequence, 520 residues long: Sodium-dependent dicarboxylate transporter SdcS (520 aa).

The next 14 helical transmembrane spans lie at 30-50 (AGQL…LLFF), 55-75 (LPWK…WWIT), 77-97 (AIPI…GHIL), 104-124 (SEYG…AIAM), 160-180 (SMFV…LAII), 207-227 (IGYA…PLII), 242-262 (FAKW…ITWL), 298-318 (KVVQ…EFLL), 323-343 (VTSS…LFII), 362-382 (ELPW…KGIS), 399-419 (GVSP…LTEV), 428-448 (MILP…LLLM), 452-472 (AMAA…AIIF), and 491-511 (LISA…VLGI).

Belongs to the SLC13A/DASS transporter (TC 2.A.47) family. NADC subfamily.

It localises to the cell membrane. Its function is as follows. Mediates the transport of the dicarboxylates fumarate, malate, and succinate across the cytoplasmic membrane via a Na(+)-electrochemical gradient. The sequence is that of Sodium-dependent dicarboxylate transporter SdcS (sdcS) from Staphylococcus aureus (strain USA300).